The chain runs to 493 residues: Cobyric acid synthase (493 aa).

One can recognise a GATase cobBQ-type domain in the interval 260–427; sequence RLSVAAIRLP…RHGYLQDDPA (168 aa). Residue His-419 is part of the active site.

Belongs to the CobB/CobQ family. CobQ subfamily.

It functions in the pathway cofactor biosynthesis; adenosylcobalamin biosynthesis. In terms of biological role, catalyzes amidations at positions B, D, E, and G on adenosylcobyrinic A,C-diamide. NH(2) groups are provided by glutamine, and one molecule of ATP is hydrogenolyzed for each amidation. In Corynebacterium efficiens (strain DSM 44549 / YS-314 / AJ 12310 / JCM 11189 / NBRC 100395), this protein is Cobyric acid synthase.